A 419-amino-acid polypeptide reads, in one-letter code: RING finger protein 150 (419 aa).

Residues 1–34 (MALSVIQACRSLALSTWLLSFCFVHLLCLDFTVA) form the signal peptide. Residues 35–197 (EKEEWYTAFV…NLQKYVSRTS (163 aa)) are Extracellular-facing. Positions 70 to 172 (SLKREARGVL…PKGRELVLLM (103 aa)) constitute a PA domain. Residues 198–218 (VVFVSISFIILMIISLAWLVF) traverse the membrane as a helical segment. Topologically, residues 219–419 (YYIQRFRYAN…IDTPTDDPKC (201 aa)) are cytoplasmic. An RING-type; atypical zinc finger spans residues 267–308 (CAVCIEGYKPNDVVRILPCRHLFHKCCVDPWLVDHRTCPMCK). A disordered region spans residues 374-419 (SEPLSQDTMPTEQSELQPIASGSSDVSLTTGAGHSDIDTPTDDPKC). Over residues 376-405 (PLSQDTMPTEQSELQPIASGSSDVSLTTGA) the composition is skewed to polar residues.

The protein localises to the membrane. This chain is RING finger protein 150 (rnf150), found in Danio rerio (Zebrafish).